We begin with the raw amino-acid sequence, 166 residues long: Packaging efficiency factor P6 (166 aa).

Residues 134 to 166 form a disordered region; the sequence is ILPESAGDQQEAEPVPSVGDQQETAPRKRFRAI.

In terms of assembly, heterodimer of P6 and P9; further multimerizes as hexamers of heterodimers. Part of the dodecameric portal complex that is composed of the packaging efficiency factor P6, the DNA packaging ATPase P9, and the internal heterododecamer P20/P22 which spans the virion inner membrane.

It localises to the virion. Functionally, together with the packaging ATPase P9, forms the external part of the portal vertex that is embeded in the capsid and which plays critical roles in genome packaging and genome ejection. Both proteins multimerize as a single ring-shaped heterdodecamer arranged around a central channel. This is Packaging efficiency factor P6 (VI) from Acinetobacter calcoaceticus (Arthrobacter siderocapsulatus).